Reading from the N-terminus, the 394-residue chain is 3-phenylpropionate/cinnamic acid dioxygenase ferredoxin--NAD(+) reductase component (394 aa).

5–36 provides a ligand contact to FAD; that stretch reads TFIIVGAGQAGAMAAATLRQQQFDGDIILIGK. 146 to 174 contacts NAD(+); that stretch reads RILIVGGGVIGLELAATSCELGANVTVIE.

It belongs to the bacterial ring-hydroxylating dioxygenase ferredoxin reductase family. In terms of assembly, this dioxygenase system consists of four proteins: the two subunits of the hydroxylase component (HcaE and HcaF), a ferredoxin (HcaC) and a ferredoxin reductase (HcaD). It depends on FAD as a cofactor.

The catalysed reaction is 2 reduced [2Fe-2S]-[ferredoxin] + NAD(+) + H(+) = 2 oxidized [2Fe-2S]-[ferredoxin] + NADH. The protein operates within aromatic compound metabolism; 3-phenylpropanoate degradation. Functionally, part of the multicomponent 3-phenylpropionate dioxygenase, that converts 3-phenylpropionic acid (PP) and cinnamic acid (CI) into 3-phenylpropionate-dihydrodiol (PP-dihydrodiol) and cinnamic acid-dihydrodiol (CI-dihydrodiol), respectively. The protein is 3-phenylpropionate/cinnamic acid dioxygenase ferredoxin--NAD(+) reductase component of Photorhabdus laumondii subsp. laumondii (strain DSM 15139 / CIP 105565 / TT01) (Photorhabdus luminescens subsp. laumondii).